A 586-amino-acid polypeptide reads, in one-letter code: Glutathione hydrolase 5 proenzyme (586 aa).

Topologically, residues 1-8 (MARGYGAT) are cytoplasmic. A helical; Signal-anchor for type II membrane protein transmembrane segment spans residues 9–29 (VSLVLLGLGLALAVIVLAVVL). At 30–586 (SRHQAPCGPQ…LRKSGEAAGY (557 aa)) the chain is on the extracellular side. Residue asparagine 98 is glycosylated (N-linked (GlcNAc...) asparagine). An L-glutamate-binding site is contributed by arginine 110. Residues asparagine 204, asparagine 303, and asparagine 347 are each glycosylated (N-linked (GlcNAc...) asparagine). Threonine 388 serves as the catalytic Nucleophile. L-glutamate contacts are provided by residues threonine 406, glutamate 427, and 469–470 (SS). Asparagine 535 and asparagine 550 each carry an N-linked (GlcNAc...) asparagine glycan.

The protein belongs to the gamma-glutamyltransferase family. In terms of assembly, heterodimer composed of the light and heavy chains. The active site is located in the light chain. Cleaved by autocatalysis into a large and a small subunit. In terms of processing, glycosylated. In terms of tissue distribution, expressed in follicular dendritic cells in lymphoid follicles (at protein level).

It is found in the membrane. It carries out the reaction glutathione + H2O = L-cysteinylglycine + L-glutamate. The catalysed reaction is an S-substituted glutathione + H2O = an S-substituted L-cysteinylglycine + L-glutamate. It catalyses the reaction leukotriene C4 + H2O = leukotriene D4 + L-glutamate. The enzyme catalyses S-[(2E,6E,10E)-geranylgeranyl]-L-glutathione + H2O = S-[(2E,6E,10E)-geranylgeranyl]-L-cysteinylglycine + L-glutamate. It carries out the reaction an N-terminal (5-L-glutamyl)-[peptide] + an alpha-amino acid = 5-L-glutamyl amino acid + an N-terminal L-alpha-aminoacyl-[peptide]. Its pathway is sulfur metabolism; glutathione metabolism. It participates in lipid metabolism; leukotriene D4 biosynthesis. Its activity is regulated as follows. Inhibited by serine-borate. Cleaves the gamma-glutamyl bond of extracellular glutathione tripeptide (gamma-Glu-Cys-Gly) and certain glutathione conjugates. Hydrolyzes glutathione releasing L-Glu and Cys-Gly dipeptide which is further metabolized to maintain extracellular cysteine levels but also to provide cysteine necessary for intracellular glutathione synthesis. Among glutathione-S-conjugates metabolizes leukotriene C4 (LTC4) and S-geranylgeranyl-glutathione (GGG), but is inactive toward gamma-glutamyl leucine. Converts extracellular LTC4 to LTD4 during acute inflammatory response. Acts as a negative regulator of GGG bioactivity. GGT5 (via GGG catabolism) and ABCC1 (via extracellular transport) establish GGG gradients within lymphoid tissues to position P2RY8-positive lymphocytes at germinal centers in lymphoid follicles and restrict their chemotactic transmigration from blood vessels to bone marrow parenchyma. The transpeptidation reaction, i.e. the transfer of gamma-glutamyl moiety to an acceptor molecule to yield a new gamma-glutamyl compound requires high concentration of dipeptide acceptor and is considered nonphysiological. The chain is Glutathione hydrolase 5 proenzyme (GGT5) from Homo sapiens (Human).